The chain runs to 174 residues: ATP synthase subunit delta (174 aa).

This sequence belongs to the ATPase delta chain family. F-type ATPases have 2 components, F(1) - the catalytic core - and F(0) - the membrane proton channel. F(1) has five subunits: alpha(3), beta(3), gamma(1), delta(1), epsilon(1). F(0) has three main subunits: a(1), b(2) and c(10-14). The alpha and beta chains form an alternating ring which encloses part of the gamma chain. F(1) is attached to F(0) by a central stalk formed by the gamma and epsilon chains, while a peripheral stalk is formed by the delta and b chains.

The protein resides in the cell inner membrane. Its function is as follows. F(1)F(0) ATP synthase produces ATP from ADP in the presence of a proton or sodium gradient. F-type ATPases consist of two structural domains, F(1) containing the extramembraneous catalytic core and F(0) containing the membrane proton channel, linked together by a central stalk and a peripheral stalk. During catalysis, ATP synthesis in the catalytic domain of F(1) is coupled via a rotary mechanism of the central stalk subunits to proton translocation. Functionally, this protein is part of the stalk that links CF(0) to CF(1). It either transmits conformational changes from CF(0) to CF(1) or is implicated in proton conduction. The polypeptide is ATP synthase subunit delta (Fusobacterium nucleatum subsp. nucleatum (strain ATCC 25586 / DSM 15643 / BCRC 10681 / CIP 101130 / JCM 8532 / KCTC 2640 / LMG 13131 / VPI 4355)).